The chain runs to 605 residues: Poly [ADP-ribose] polymerase 2-B (605 aa).

The tract at residues 96–122 (NAAAAAAVTDGGDQDKTKSAKDDDGDD) is disordered. The span at 108–122 (DQDKTKSAKDDDGDD) shows a compositional bias: basic and acidic residues. One can recognise a WGR domain in the interval 153–260 (AYHVLQVGDE…TKLETRTASF (108 aa)). Positions 250–370 (ETKLETRTAS…EIEIAIKLLE (121 aa)) constitute a PARP alpha-helical domain. One can recognise a PARP catalytic domain in the interval 378–605 (HPLYARYKQF…NVNFNFKRWG (228 aa)).

Belongs to the ARTD/PARP family.

It is found in the nucleus. The catalysed reaction is NAD(+) + (ADP-D-ribosyl)n-acceptor = nicotinamide + (ADP-D-ribosyl)n+1-acceptor + H(+).. It carries out the reaction L-aspartyl-[protein] + NAD(+) = 4-O-(ADP-D-ribosyl)-L-aspartyl-[protein] + nicotinamide. It catalyses the reaction L-glutamyl-[protein] + NAD(+) = 5-O-(ADP-D-ribosyl)-L-glutamyl-[protein] + nicotinamide. Functionally, involved in the base excision repair (BER) pathway, by catalyzing the poly(ADP-ribosyl)ation of a limited number of acceptor proteins involved in chromatin architecture and in DNA metabolism. This modification follows DNA damages and appears as an obligatory step in a detection/signaling pathway leading to the reparation of DNA strand breaks. The polypeptide is Poly [ADP-ribose] polymerase 2-B (PARP2-B) (Oryza sativa subsp. japonica (Rice)).